The primary structure comprises 378 residues: L-lactate dehydrogenase (378 aa).

The 378-residue stretch at Met1–Arg378 folds into the FMN hydroxy acid dehydrogenase domain. A substrate-binding site is contributed by Tyr24. Residues Ser106 and Gln127 each coordinate FMN. Tyr129 serves as a coordination point for substrate. Thr155 contributes to the FMN binding site. Residue Arg164 participates in substrate binding. Position 251 (Lys251) interacts with FMN. Residue His275 is the Proton acceptor of the active site. Arg278 is a substrate binding site. Asp306–Arg330 contacts FMN.

It belongs to the FMN-dependent alpha-hydroxy acid dehydrogenase family. FMN is required as a cofactor.

It is found in the cell inner membrane. The catalysed reaction is (S)-lactate + A = pyruvate + AH2. In terms of biological role, catalyzes the conversion of L-lactate to pyruvate. Is coupled to the respiratory chain. The protein is L-lactate dehydrogenase of Vibrio cholerae serotype O1 (strain ATCC 39315 / El Tor Inaba N16961).